Consider the following 357-residue polypeptide: Dual-specificity RNA methyltransferase RlmN (357 aa).

Glu-89 serves as the catalytic Proton acceptor. Positions 109 to 340 (EREKYTVCVS…CTIRESKALD (232 aa)) constitute a Radical SAM core domain. Residues Cys-116 and Cys-345 are joined by a disulfide bond. Residues Cys-123, Cys-127, and Cys-130 each coordinate [4Fe-4S] cluster. S-adenosyl-L-methionine is bound by residues 173-174 (GE), Ser-203, 226-228 (SLH), and Asn-302. Cys-345 functions as the S-methylcysteine intermediate in the catalytic mechanism.

The protein belongs to the radical SAM superfamily. RlmN family. Requires [4Fe-4S] cluster as cofactor.

The protein resides in the cytoplasm. It carries out the reaction adenosine(2503) in 23S rRNA + 2 reduced [2Fe-2S]-[ferredoxin] + 2 S-adenosyl-L-methionine = 2-methyladenosine(2503) in 23S rRNA + 5'-deoxyadenosine + L-methionine + 2 oxidized [2Fe-2S]-[ferredoxin] + S-adenosyl-L-homocysteine. The enzyme catalyses adenosine(37) in tRNA + 2 reduced [2Fe-2S]-[ferredoxin] + 2 S-adenosyl-L-methionine = 2-methyladenosine(37) in tRNA + 5'-deoxyadenosine + L-methionine + 2 oxidized [2Fe-2S]-[ferredoxin] + S-adenosyl-L-homocysteine. Functionally, specifically methylates position 2 of adenine 2503 in 23S rRNA and position 2 of adenine 37 in tRNAs. m2A2503 modification seems to play a crucial role in the proofreading step occurring at the peptidyl transferase center and thus would serve to optimize ribosomal fidelity. This chain is Dual-specificity RNA methyltransferase RlmN, found in Helicobacter pylori (strain ATCC 700392 / 26695) (Campylobacter pylori).